Consider the following 384-residue polypeptide: L-cysteine:1D-myo-inositol 2-amino-2-deoxy-alpha-D-glucopyranoside ligase (384 aa).

Cys16 lines the Zn(2+) pocket. L-cysteinyl-5'-AMP contacts are provided by residues 16–19 (CGIT), Thr31, and 54–56 (NVT). Positions 18–28 (ITPYDATHLGH) match the 'HIGH' region motif. The 'ERGGDP' region signature appears at 159-164 (ERGGDP). Trp199 is a binding site for L-cysteinyl-5'-AMP. Cys203 contributes to the Zn(2+) binding site. L-cysteinyl-5'-AMP is bound at residue 221–223 (GSD). His228 provides a ligand contact to Zn(2+). Position 255 (Ile255) interacts with L-cysteinyl-5'-AMP. The short motif at 261–265 (KMSKS) is the 'KMSKS' region element.

This sequence belongs to the class-I aminoacyl-tRNA synthetase family. MshC subfamily. As to quaternary structure, monomer. The cofactor is Zn(2+).

It carries out the reaction 1D-myo-inositol 2-amino-2-deoxy-alpha-D-glucopyranoside + L-cysteine + ATP = 1D-myo-inositol 2-(L-cysteinylamino)-2-deoxy-alpha-D-glucopyranoside + AMP + diphosphate + H(+). Catalyzes the ATP-dependent condensation of GlcN-Ins and L-cysteine to form L-Cys-GlcN-Ins. The chain is L-cysteine:1D-myo-inositol 2-amino-2-deoxy-alpha-D-glucopyranoside ligase from Mycobacterium avium (strain 104).